Consider the following 299-residue polypeptide: ATP phosphoribosyltransferase (299 aa).

This sequence belongs to the ATP phosphoribosyltransferase family. Long subfamily. As to quaternary structure, equilibrium between an active dimeric form, an inactive hexameric form and higher aggregates. Interconversion between the various forms is largely reversible and is influenced by the natural substrates and inhibitors of the enzyme. It depends on Mg(2+) as a cofactor.

The protein localises to the cytoplasm. It carries out the reaction 1-(5-phospho-beta-D-ribosyl)-ATP + diphosphate = 5-phospho-alpha-D-ribose 1-diphosphate + ATP. It participates in amino-acid biosynthesis; L-histidine biosynthesis; L-histidine from 5-phospho-alpha-D-ribose 1-diphosphate: step 1/9. Feedback inhibited by histidine. Catalyzes the condensation of ATP and 5-phosphoribose 1-diphosphate to form N'-(5'-phosphoribosyl)-ATP (PR-ATP). Has a crucial role in the pathway because the rate of histidine biosynthesis seems to be controlled primarily by regulation of HisG enzymatic activity. In Edwardsiella ictaluri (strain 93-146), this protein is ATP phosphoribosyltransferase.